A 1035-amino-acid polypeptide reads, in one-letter code: POM121-like protein 2 (1035 aa).

6 disordered regions span residues 1–37 (MGSFLSKLELSPSSPAQVRTDLPERPTKRRPPQPLHQ), 177–213 (LFPESLDSKRRSPETRPSAFKPLMKNGTLTSFVPRPG), 286–343 (IKKE…LGYA), 415–508 (LGPL…QSTL), 754–791 (SPLGSSSRPPFPLSQGANPQPAFGATNGQKQGPSQPAL), and 972–1035 (NTPV…AYKK). Positions 27–37 (TKRRPPQPLHQ) are enriched in basic residues. Over residues 309-319 (GGSESSGQQNQ) the composition is skewed to low complexity. Polar residues-rich tracts occupy residues 320-330 (KIPQLPSSPEN), 420-431 (SPQSTGEATSVA), and 445-462 (GCSQSELLPGTSPDSKPT). Residues 464–481 (TFILLTPTSPTLPVTDTT) show a composition bias toward low complexity. Positions 493–502 (PMPPDPPAPP) are enriched in pro residues. Low complexity predominate over residues 1000 to 1016 (RGPFRSSASSFSIGAKS). Residues 1017–1035 (KTPKNREKGHSRRHHAYKK) show a composition bias toward basic residues.

It belongs to the POM121 family.

The chain is POM121-like protein 2 (POM121L2) from Homo sapiens (Human).